The primary structure comprises 470 residues: Ribulose bisphosphate carboxylase large chain (470 aa).

Substrate-binding residues include asparagine 115 and threonine 165. The active-site Proton acceptor is lysine 167. Lysine 169 serves as a coordination point for substrate. Mg(2+) is bound by residues lysine 193, aspartate 195, and glutamate 196. Lysine 193 carries the post-translational modification N6-carboxylysine. The active-site Proton acceptor is histidine 286. Arginine 287, histidine 319, and serine 371 together coordinate substrate.

The protein belongs to the RuBisCO large chain family. Type I subfamily. Heterohexadecamer of 8 large chains and 8 small chains. Mg(2+) serves as cofactor.

The protein localises to the carboxysome. It carries out the reaction 2 (2R)-3-phosphoglycerate + 2 H(+) = D-ribulose 1,5-bisphosphate + CO2 + H2O. The enzyme catalyses D-ribulose 1,5-bisphosphate + O2 = 2-phosphoglycolate + (2R)-3-phosphoglycerate + 2 H(+). Functionally, ruBisCO catalyzes two reactions: the carboxylation of D-ribulose 1,5-bisphosphate, the primary event in carbon dioxide fixation, as well as the oxidative fragmentation of the pentose substrate in the photorespiration process. Both reactions occur simultaneously and in competition at the same active site. This chain is Ribulose bisphosphate carboxylase large chain, found in Prochlorococcus marinus (strain MIT 9303).